A 395-amino-acid chain; its full sequence is ATP synthase subunit a (395 aa).

A run of 5 helical transmembrane segments spans residues 153–173, 246–266, 273–293, 313–333, and 339–359; these read FTNPSLFMLLTLSLVLLLVYF, HFLITLGLSFSIFIGITIVGF, FLSFLLPAGVPLPLAPFLVLL, MMAGHSSVKILSGFAWTMLCM, and FIGDLGPLFIVLALTGLELGV.

Belongs to the ATPase A chain family. As to quaternary structure, F-type ATPases have 2 components, CF(1) - the catalytic core - and CF(0) - the membrane proton channel. CF(1) has five subunits: alpha(3), beta(3), gamma(1), delta(1), epsilon(1). CF(0) has three main subunits: a, b and c.

It is found in the mitochondrion inner membrane. Functionally, mitochondrial membrane ATP synthase (F(1)F(0) ATP synthase or Complex V) produces ATP from ADP in the presence of a proton gradient across the membrane which is generated by electron transport complexes of the respiratory chain. F-type ATPases consist of two structural domains, F(1) - containing the extramembraneous catalytic core and F(0) - containing the membrane proton channel, linked together by a central stalk and a peripheral stalk. During catalysis, ATP synthesis in the catalytic domain of F(1) is coupled via a rotary mechanism of the central stalk subunits to proton translocation. Key component of the proton channel; it may play a direct role in the translocation of protons across the membrane. The protein is ATP synthase subunit a (ATP6) of Nicotiana tabacum (Common tobacco).